Consider the following 259-residue polypeptide: Cysteine protease IpaJ (259 aa).

Catalysis depends on residues Cys64, His206, and Asp218.

Its subcellular location is the secreted. The protein resides in the host cytoplasm. Functionally, virulence factor that eliminates N-myristoyl protein modifications in infected host cells. Acts as a cysteine protease that cleaves the peptide bond between N-myristoylated Gly-2 and Asn-3 of human ARF1, leading to the elimination of the myristoyl group and alteration of protein trafficking in host cell. Could also cleave an array of N-myristoylated host proteins involved in cellular growth, signal transduction, autophagasome maturation and organelle function. The sequence is that of Cysteine protease IpaJ (ipaJ) from Shigella flexneri.